The following is a 350-amino-acid chain: Kelch domain-containing protein 8A (350 aa).

Kelch repeat units follow at residues 1-31, 32-79, 81-127, 128-175, 176-222, 224-278, and 279-326; these read MEVPNVKDFQWKRLAPLPSRRVYCSLLETGG, QVYA…ALGK, IMVI…AKDY, RVYA…LRGS, KIYV…TLDN, LYSL…SLSG, and RVIV…VVKN.

This chain is Kelch domain-containing protein 8A (KLHDC8A), found in Homo sapiens (Human).